The chain runs to 319 residues: MEKRMETLEQIKETLRETSKLVPDIVRAAVGLEHHYQTVELPHDDGCVKSFAAAFLRPQAQEQAHGDGEVQQAVRMESASCYVPDHDEDAHFVHDAAGVVGGYRRRVGVDAGAFSRGLMTSAFAQLVTAEPGTPVCPYTLLERAYEETLESGAQGGSTAVILSLADGNVLRWAYIGDSAFAVLRDGRVVVRSVQQQRYFNAPYYLGGRRGDEGMTVGMVGEMKVRRGDVVVAGTDGLFDNMSDAELEKVVQIGTALGFSPKNMADIIGGTAYEMSRCLLKDSPFAVEWRKQHENEEGHFYGGKVDDITVVVACIVSSDS.

The region spanning 73–314 (AVRMESASCY…DDITVVVACI (242 aa)) is the PPM-type phosphatase domain. Mn(2+)-binding residues include G102, D235, and D305.

It belongs to the PP2C family. The cofactor is Mg(2+).

It carries out the reaction O-phospho-L-seryl-[protein] + H2O = L-seryl-[protein] + phosphate. It catalyses the reaction O-phospho-L-threonyl-[protein] + H2O = L-threonyl-[protein] + phosphate. This chain is Putative protein phosphatase 2C 23, found in Oryza sativa subsp. japonica (Rice).